A 448-amino-acid polypeptide reads, in one-letter code: Phosphoglucosamine mutase (448 aa).

The active-site Phosphoserine intermediate is the Ser-101. Positions 101, 242, 244, and 246 each coordinate Mg(2+). Ser-101 carries the phosphoserine modification.

This sequence belongs to the phosphohexose mutase family. Mg(2+) serves as cofactor. In terms of processing, activated by phosphorylation.

The enzyme catalyses alpha-D-glucosamine 1-phosphate = D-glucosamine 6-phosphate. In terms of biological role, catalyzes the conversion of glucosamine-6-phosphate to glucosamine-1-phosphate. The protein is Phosphoglucosamine mutase of Nitrobacter winogradskyi (strain ATCC 25391 / DSM 10237 / CIP 104748 / NCIMB 11846 / Nb-255).